The sequence spans 782 residues: Beta-mannosyltransferase 9 (782 aa).

Residues 1-26 (MEKLIQSTISLFISLSLKISTKSYKS) lie on the Cytoplasmic side of the membrane. The helical transmembrane segment at 27-47 (IISILFIISLLSIILTTTITV) threads the bilayer. At 48–782 (YHDPERIITT…GKDKGKDKSN (735 aa)) the chain is on the extracellular side. Positions 66–96 (KSVFTASSPKQQDKLQQEIDQHQSDNSHEQQ) are disordered. The span at 76–96 (QQDKLQQEIDQHQSDNSHEQQ) shows a compositional bias: basic and acidic residues. Residues Asn445, Asn648, and Asn699 are each glycosylated (N-linked (GlcNAc...) asparagine).

It belongs to the BMT family.

Its subcellular location is the membrane. Beta-mannosyltransferase involved in cell wall biosynthesis through beta-1,2-mannosylation of cell wall phosphopeptidomannan. The polypeptide is Beta-mannosyltransferase 9 (BMT9) (Candida albicans (strain SC5314 / ATCC MYA-2876) (Yeast)).